Reading from the N-terminus, the 491-residue chain is Histamine H1 receptor (491 aa).

Residues 1 to 30 (MTCPNSSCVFEDKMCQGNKTAPANDAQLTP) are Extracellular-facing. 2 N-linked (GlcNAc...) asparagine glycosylation sites follow: Asn5 and Asn18. The helical transmembrane segment at 31 to 51 (LVVVLSTISLVTVGLNLLVLY) threads the bilayer. Topologically, residues 52-65 (AVRSERKLHTVGNL) are cytoplasmic. The chain crosses the membrane as a helical span at residues 66-90 (YIVSLSVADLIVGVVVMPMNILYLL). Residues 91–98 (MSRWSLGR) are Extracellular-facing. The chain crosses the membrane as a helical span at residues 99-124 (PLCLFWLSMDYVASTASIFSVFILCI). Cys101 and Cys181 are oxidised to a cystine. Residues Asp108 and Thr113 each coordinate histamine. Residues 108–113 (DYVAST) are important for agonist binding. Residues 125–145 (DRYRSVQQPLKYLRYRTKTRA) are Cytoplasmic-facing. 2 positions are modified to phosphothreonine: Thr141 and Thr143. A helical membrane pass occupies residues 146 to 165 (SITILAAWFLSFLWIIPILG). At 166-189 (WRHFQPKTPEPREDKCETDFYNVT) the chain is on the extracellular side. The chain crosses the membrane as a helical span at residues 190-212 (WFKVMTAIINFYLPTLLMLWFYA). Asn199 contacts histamine. Residues 213-420 (KIYKAVRQHC…MNRERKAAKQ (208 aa)) lie on the Cytoplasmic side of the membrane. Ser231 carries the phosphoserine modification. Disordered regions lie at residues 246-297 (QVGA…KEEK) and 360-385 (QSFS…SESS). A compositionally biased stretch (basic and acidic residues) spans 252 to 262 (PGKESPWEVLK). 3 positions are modified to phosphoserine: Ser384, Ser400, and Ser402. The helical transmembrane segment at 421-444 (LGFIMAAFIICWIPYFIFFMVIAF) threads the bilayer. The important for agonist binding stretch occupies residues 428–432 (FIICW). Tyr435 serves as a coordination point for histamine. Cysteines 445 and 448 form a disulfide. Topologically, residues 445–450 (CESCCN) are extracellular. The helical transmembrane segment at 451–473 (QHVHMFTIWLGYINSTLNPLIYP) threads the bilayer. The Cytoplasmic segment spans residues 474 to 491 (LCNENFKKTFKKILHIRS).

It belongs to the G-protein coupled receptor 1 family. Phosphorylation at sites in the second and third cytoplasmic loops independently contribute to agonist-induced receptor down-regulation. As to expression, brain, lung, small intestine, uterus, adrenal medulla and spleen.

The protein resides in the cell membrane. Functionally, G-protein-coupled receptor for histamine, a biogenic amine that functions as an immune modulator and a neurotransmitter. Through the H1 receptor, histamine mediates the contraction of smooth muscles and increases capillary permeability due to contraction of terminal venules. Also mediates neurotransmission in the central nervous system and thereby regulates circadian rhythms, emotional and locomotor activities as well as cognitive functions. The chain is Histamine H1 receptor from Bos taurus (Bovine).